The chain runs to 101 residues: NAD(P)H-quinone oxidoreductase subunit 4L, chloroplastic (101 aa).

Transmembrane regions (helical) follow at residues 2–22 (YIENFLLLASALFCIGIYGLL), 32–52 (MCLELCLNAININFIAFSNFI), and 61–81 (VIAIFIMTIAAAEAAIGLALV).

It belongs to the complex I subunit 4L family. As to quaternary structure, NDH is composed of at least 16 different subunits, 5 of which are encoded in the nucleus.

It localises to the plastid. The protein resides in the chloroplast thylakoid membrane. The enzyme catalyses a plastoquinone + NADH + (n+1) H(+)(in) = a plastoquinol + NAD(+) + n H(+)(out). It carries out the reaction a plastoquinone + NADPH + (n+1) H(+)(in) = a plastoquinol + NADP(+) + n H(+)(out). Functionally, NDH shuttles electrons from NAD(P)H:plastoquinone, via FMN and iron-sulfur (Fe-S) centers, to quinones in the photosynthetic chain and possibly in a chloroplast respiratory chain. The immediate electron acceptor for the enzyme in this species is believed to be plastoquinone. Couples the redox reaction to proton translocation, and thus conserves the redox energy in a proton gradient. The polypeptide is NAD(P)H-quinone oxidoreductase subunit 4L, chloroplastic (Mesostigma viride (Green alga)).